We begin with the raw amino-acid sequence, 247 residues long: MNVLPCSINTLKGLYDISGVEVGQHLYWQIGGFQVHGQVLITSWVVIAILLGSVTIAVRNPQTIPTNSQNFFEYVLEFIRDLSKTQIGEDYGPWVPFIGTMFLFIFVSNWSGALFPWKIIQLPHGELAAPTNDINTTVALALPTSVAYFYAGLTKKGLGYFSKYIQPTPILLPINVLEDFTKPLSLSFRLFGNILADELVVVVLVSLVPSVVPIPVMFLGLFTSGIQALIFATLAAAYIGESMEGHH.

The next 5 membrane-spanning stretches (helical) occupy residues 38-58, 95-115, 134-154, 199-219, and 220-240; these read QVLI…TIAV, VPFI…GALF, INTT…AGLT, LVVV…VMFL, and GLFT…AYIG.

It belongs to the ATPase A chain family. F-type ATPases have 2 components, CF(1) - the catalytic core - and CF(0) - the membrane proton channel. CF(1) has five subunits: alpha(3), beta(3), gamma(1), delta(1), epsilon(1). CF(0) has four main subunits: a, b, b' and c.

Its subcellular location is the plastid. It is found in the chloroplast thylakoid membrane. Functionally, key component of the proton channel; it plays a direct role in the translocation of protons across the membrane. In Piper cenocladum (Ant piper), this protein is ATP synthase subunit a, chloroplastic.